Consider the following 116-residue polypeptide: Large ribosomal subunit protein uL18 (116 aa).

This sequence belongs to the universal ribosomal protein uL18 family. As to quaternary structure, part of the 50S ribosomal subunit; part of the 5S rRNA/L5/L18/L25 subcomplex. Contacts the 5S and 23S rRNAs.

This is one of the proteins that bind and probably mediate the attachment of the 5S RNA into the large ribosomal subunit, where it forms part of the central protuberance. The sequence is that of Large ribosomal subunit protein uL18 from Hahella chejuensis (strain KCTC 2396).